Consider the following 423-residue polypeptide: F-box/LRR-repeat protein 2 (423 aa).

The 47-residue stretch at 9 to 55 (GLINKKLPKELLLRIFSFLDIVTLCRCAQISKAWNILALDGSNWQRV) folds into the F-box domain. 13 LRR repeats span residues 61-87 (QTDV…SLRG), 88-113 (CIGV…NLNG), 114-139 (CTKI…DLTS), 140-165 (CVSV…NLSW), 166-191 (CDQI…LLRG), 192-217 (CTQL…NLQS), 218-243 (CSRI…CLSG), 244-269 (CSNL…EAAR), 270-295 (CSHL…DLEE), 296-321 (CVLI…SLSH), 322-350 (CELI…ELDN), 351-375 (CLLV…ELYD), and 376-401 (CQQV…AYFA). The interaction with Calmodulin stretch occupies residues 80–90 (LRKLSLRGCIG). A Glycyl lysine isopeptide (Lys-Gly) (interchain with G-Cter in ubiquitin) cross-link involves residue Lys-201. Position 404 is a phosphothreonine; by GSK3-beta (Thr-404). Cys-420 carries S-geranylgeranyl cysteine lipidation. The CAAX motif motif lies at 420 to 423 (CVIL).

In terms of assembly, part of the SCF (SKP1-CUL1-F-box) E3 ubiquitin-protein ligase complex SCF(FBXL2) composed of CUL1, SKP1, RBX1 and FBXL2. Interacts with calmodulin; may antagonize substrate ubiquitination by SCF(FBXL2). May interact with PIK3R1. Interacts with PTPN13. In terms of processing, phosphorylated by GSK-beta (GSK3B), promoting recognition by FBXO3, leading to its ubiquitination by the SCF(FBXO3) complex. Ubiquitinated at Lys-201 by the SCF(FBXO3) complex in response to lipopolysaccharide (LPS), leading to its degradation by the proteasome.

It is found in the membrane. It participates in protein modification; protein ubiquitination. Calcium-activated substrate recognition component of the SCF (SKP1-cullin-F-box protein) E3 ubiquitin-protein ligase complex, SCF(FBXL2), which mediates the ubiquitination and subsequent proteasomal degradation of target proteins. Unlike many F-box proteins, FBXL2 does not seem to target phosphodegron within its substrates but rather calmodulin-binding motifs and is thereby antagonized by calmodulin. This is the case for the cyclins CCND2 and CCND3 which polyubiquitination and subsequent degradation are inhibited by calmodulin. Through CCND2 and CCND3 degradation induces cell-cycle arrest in G(0). SCF(FBXL2) also mediates PIK3R2 ubiquitination and proteasomal degradation thereby regulating phosphatidylinositol 3-kinase signaling and autophagy. PCYT1A monoubiquitination by SCF(FBXL2) and subsequent degradation regulates synthesis of phosphatidylcholine, which is utilized for formation of membranes and of pulmonary surfactant. The SCF(FBXL2) complex acts as a regulator of inflammation by mediating ubiquitination and degradation of TRAF proteins (TRAF1, TRAF2, TRAF3, TRAF4, TRAF5 and TRAF6). The SCF(FBXL2) complex acts as a negative regulator of the NLRP3 inflammasome by mediating ubiquitination and degradation of NLRP3. The polypeptide is F-box/LRR-repeat protein 2 (Mus musculus (Mouse)).